Reading from the N-terminus, the 276-residue chain is Large ribosomal subunit protein uL2 (276 aa).

Positions arginine 221–lysine 276 are disordered. Residues lysine 252–lysine 276 show a composition bias toward basic residues.

This sequence belongs to the universal ribosomal protein uL2 family. As to quaternary structure, part of the 50S ribosomal subunit. Forms a bridge to the 30S subunit in the 70S ribosome.

Its function is as follows. One of the primary rRNA binding proteins. Required for association of the 30S and 50S subunits to form the 70S ribosome, for tRNA binding and peptide bond formation. It has been suggested to have peptidyltransferase activity; this is somewhat controversial. Makes several contacts with the 16S rRNA in the 70S ribosome. This Aster yellows witches'-broom phytoplasma (strain AYWB) protein is Large ribosomal subunit protein uL2.